Reading from the N-terminus, the 457-residue chain is Senescence-associated protein OSA15, chloroplastic (457 aa).

Residues 1–57 (MATRIPGTVAASGVYYNDQYRMPCKLKGIHCMALNCIPQKAKVRKCMNGYQSTFRFC) constitute a chloroplast transit peptide.

The protein belongs to the ATA15/OSA15 family. Expressed in leaves (at protein level).

It localises to the plastid. The protein localises to the chloroplast. Its function is as follows. May be involved in the regulation of leaf senescence. This is Senescence-associated protein OSA15, chloroplastic from Oryza sativa subsp. japonica (Rice).